We begin with the raw amino-acid sequence, 59 residues long: UPF0434 protein VIBHAR_01537 (59 aa).

This sequence belongs to the UPF0434 family.

The protein is UPF0434 protein VIBHAR_01537 of Vibrio campbellii (strain ATCC BAA-1116).